The sequence spans 271 residues: 5-deoxy-glucuronate isomerase (271 aa).

This sequence belongs to the isomerase IolB family.

It catalyses the reaction 5-deoxy-D-glucuronate = 5-dehydro-2-deoxy-D-gluconate. The protein operates within polyol metabolism; myo-inositol degradation into acetyl-CoA; acetyl-CoA from myo-inositol: step 4/7. Its function is as follows. Involved in the isomerization of 5-deoxy-glucuronate (5DG) to 5-dehydro-2-deoxy-D-gluconate (DKG or 2-deoxy-5-keto-D-gluconate). In Bacillus licheniformis (strain ATCC 14580 / DSM 13 / JCM 2505 / CCUG 7422 / NBRC 12200 / NCIMB 9375 / NCTC 10341 / NRRL NRS-1264 / Gibson 46), this protein is 5-deoxy-glucuronate isomerase.